The primary structure comprises 359 residues: snRNA-activating protein complex subunit 2 (359 aa).

Basic residues predominate over residues 1 to 11; the sequence is MKPPQRRRRVP. Disordered stretches follow at residues 1-22, 157-221, and 291-327; these read MKPP…TGPT, NQDG…GSST, and TALP…SEPI.

In terms of assembly, part of the SNAPc complex composed of 5 subunits: SNAPC1, SNAPC2, SNAPC3, SNAPC4 and SNAPC5. SNAPC2 interacts with TBP and SNAPC4.

Its subcellular location is the nucleus. Part of the SNAPc complex required for the transcription of both RNA polymerase II and III small-nuclear RNA genes. Binds to the proximal sequence element (PSE), a non-TATA-box basal promoter element common to these 2 types of genes. Recruits TBP and BRF2 to the U6 snRNA TATA box. This is snRNA-activating protein complex subunit 2 (Snapc2) from Mus musculus (Mouse).